We begin with the raw amino-acid sequence, 374 residues long: Glyceraldehyde-3-phosphate dehydrogenase A, chloroplastic (374 aa).

A chloroplast-targeting transit peptide spans 1–34 (MAAMMQKSAFTGSAVSSKSGVRAKAARAVVDVRA). NADP(+) contacts are provided by residues 47–48 (RI), Asp71, and Arg116. A disulfide bond links Cys55 and Cys325. D-glyceraldehyde 3-phosphate-binding positions include 189–191 (SCT), Thr220, Arg235, 248–249 (TG), and Arg271. The active-site Nucleophile is the Cys190. Asn353 lines the NADP(+) pocket.

It belongs to the glyceraldehyde-3-phosphate dehydrogenase family. As to quaternary structure, homotetramer. Component of a complex that contains two dimers of PRK, two tetramers of GAPDH and CP12. CP12 associates with GAPDH, causing its conformation to change. This GAPDH/CP12 complex binds PRK to form a half-complex (one unit). This unit probably dimerizes due partially to interactions between the enzymes of each unit.

Its subcellular location is the plastid. It is found in the chloroplast. The catalysed reaction is D-glyceraldehyde 3-phosphate + phosphate + NADP(+) = (2R)-3-phospho-glyceroyl phosphate + NADPH + H(+). It participates in carbohydrate biosynthesis; Calvin cycle. This chain is Glyceraldehyde-3-phosphate dehydrogenase A, chloroplastic (GAPA), found in Chlamydomonas reinhardtii (Chlamydomonas smithii).